Reading from the N-terminus, the 212-residue chain is MAYAYLFKYIIIGDTGVGKSCLLLQFTDKRFQPVHDLTIGVEFGARMITIDGKQIKLQIWDTAGQESFRSITRSYYRGAAGALLVYDITRRDTFNHLTTWLEDARQHSNSNMVIMLIGNKSDLESRREVKKEEGEAFAREHGLIFMETSAKTASNVEEAFINTAKEIYEKIQEGVFDINNEANGIKIGPQHAATNATHAGNQGGQQAGGGCC.

A2 is modified (N-acetylalanine). The interval 2 to 19 is required for interaction with PRKCI; the sequence is AYAYLFKYIIIGDTGVGK. Positions 16, 17, 18, 19, 20, 21, and 38 each coordinate GTP. S20 serves as a coordination point for Mg(2+). The short motif at 37 to 42 is the Switch 1 element; it reads LTIGVE. The Mg(2+) site is built by T38 and D61. A Switch 2 motif is present at residues 63–72; the sequence is AGQESFRSIT. GTP-binding residues include G64, N119, K120, D122, A150, and K151. Residues C211 and C212 are each lipidated (S-geranylgeranyl cysteine).

The protein belongs to the small GTPase superfamily. Rab family. As to quaternary structure, interacts with PRKCI. Interacts with TRIP11. Interacts (in GTP-bound form) with GARIN1B. Interacts (GTP-bound) with HOPS complex component VPS39; interaction contributes to obtaining a functional HOPS complex that promotes autophagosome-lysosome membrane fusion driven by STX17-SNAP29-VAMP8. May interact with VPS41. Mg(2+) serves as cofactor. In terms of processing, prenylated. Prenylation is required for association with cellular membranes.

The protein localises to the endoplasmic reticulum-Golgi intermediate compartment membrane. It is found in the melanosome. The protein resides in the endoplasmic reticulum membrane. It localises to the golgi apparatus membrane. Its subcellular location is the cytoplasmic vesicle. The protein localises to the secretory vesicle. It is found in the acrosome. The protein resides in the autophagosome membrane. It catalyses the reaction GTP + H2O = GDP + phosphate + H(+). Regulated by guanine nucleotide exchange factors (GEFs) which promote the exchange of bound GDP for free GTP, GTPase activating proteins (GAPs) which increase the GTP hydrolysis activity, and GDP dissociation inhibitors (GDIs) which inhibit the dissociation of the nucleotide from the GTPase. The small GTPases Rab are key regulators of intracellular membrane trafficking, from the formation of transport vesicles to their fusion with membranes. Rabs cycle between active GTP-bound and inactive GDP-bound states. In their active state, drive transport of vesicular carriers from donor organelles to acceptor organelles to regulate the membrane traffic that maintains organelle identity and morphology. RAB2A regulates autophagy by promoting autophagosome-lysosome fusion via recruitment of the HOPS endosomal tethering complex; this process involves autophagosomal RAB2A and lysosomal RAB39A recruitment of HOPS subcomplexes VPS39-VPS11 and VPS41-VPS16-VPS18-VPS33A, respectively, which assemble into a functional complex to mediate membrane tethering and SNAREs-driven membrane fusion. Required for protein transport from the endoplasmic reticulum to the Golgi complex. Regulates the compacted morphology of the Golgi. Together with RAB2B, redundantly required for efficient autophagic flux. This chain is Ras-related protein Rab-2A (RAB2A), found in Canis lupus familiaris (Dog).